A 379-amino-acid chain; its full sequence is UDP-4-amino-4-deoxy-L-arabinose--oxoglutarate aminotransferase (379 aa).

At Lys182 the chain carries N6-(pyridoxal phosphate)lysine.

It belongs to the DegT/DnrJ/EryC1 family. ArnB subfamily. As to quaternary structure, homodimer. Pyridoxal 5'-phosphate is required as a cofactor.

The enzyme catalyses UDP-4-amino-4-deoxy-beta-L-arabinose + 2-oxoglutarate = UDP-beta-L-threo-pentopyranos-4-ulose + L-glutamate. It functions in the pathway nucleotide-sugar biosynthesis; UDP-4-deoxy-4-formamido-beta-L-arabinose biosynthesis; UDP-4-deoxy-4-formamido-beta-L-arabinose from UDP-alpha-D-glucuronate: step 2/3. Its pathway is bacterial outer membrane biogenesis; lipopolysaccharide biosynthesis. In terms of biological role, catalyzes the conversion of UDP-4-keto-arabinose (UDP-Ara4O) to UDP-4-amino-4-deoxy-L-arabinose (UDP-L-Ara4N). The modified arabinose is attached to lipid A and is required for resistance to polymyxin and cationic antimicrobial peptides. The polypeptide is UDP-4-amino-4-deoxy-L-arabinose--oxoglutarate aminotransferase (Escherichia coli O7:K1 (strain IAI39 / ExPEC)).